The following is a 363-amino-acid chain: MSQPIKFAYWVPNVSGGLVVSKIEQRTSWDIDYNRKLAQIAERSGFEYALSQIRFTAGYGADNQHESVTISHALLAATEKLKVIAAILPGPWSPALAAKQLATIDQFTGGRIAVNVVSGWFKGEFRAIGEPWLEHDERYRRSEEFIRALKGIWTQDNFSFHGDFYRFNDYTLKPKPLQRPHPEIFQGGSSRAARDMASRVSDWYFTNGNSVEGIKAQVDDIRAKAAANGHAVKIGVNAFVIARDTEEEARAVLAEIIAKADPEAVNGFGSEVKNAGAASPEGEGNWAKSTFEDLVQYNDGFKTNLIGTPRQIAERIVALKAIGVDLILSGFLHFQEEVEYFGRHVLPLVRELEQERRAAVAVA.

The protein belongs to the SsuD family.

The catalysed reaction is dimethyl sulfone + FMNH2 + O2 = methanesulfinate + FMN + formaldehyde + H2O + 2 H(+). In terms of biological role, involved in the dimethyl sulfide degradation pathway. Catalyzes the oxidation of dimethylsulfone (DMSO2) to yield methanesulfinate, which is oxidized spontaneously to methanesulfonate in the presence of dioxygen and FMNH(2). The chain is FMNH(2)-dependent dimethylsulfone monooxygenase from Pseudomonas putida (Arthrobacter siderocapsulatus).